The sequence spans 122 residues: Ribosome-binding factor A (122 aa).

It belongs to the RbfA family. Monomer. Binds 30S ribosomal subunits, but not 50S ribosomal subunits or 70S ribosomes.

Its subcellular location is the cytoplasm. Functionally, one of several proteins that assist in the late maturation steps of the functional core of the 30S ribosomal subunit. Associates with free 30S ribosomal subunits (but not with 30S subunits that are part of 70S ribosomes or polysomes). Required for efficient processing of 16S rRNA. May interact with the 5'-terminal helix region of 16S rRNA. This is Ribosome-binding factor A from Geotalea uraniireducens (strain Rf4) (Geobacter uraniireducens).